A 295-amino-acid polypeptide reads, in one-letter code: 4-hydroxy-tetrahydrodipicolinate synthase (295 aa).

Pyruvate is bound at residue Thr-46. Catalysis depends on Tyr-134, which acts as the Proton donor/acceptor. Lys-162 functions as the Schiff-base intermediate with substrate in the catalytic mechanism. Val-204 serves as a coordination point for pyruvate.

It belongs to the DapA family. Homotetramer; dimer of dimers.

It is found in the cytoplasm. It carries out the reaction L-aspartate 4-semialdehyde + pyruvate = (2S,4S)-4-hydroxy-2,3,4,5-tetrahydrodipicolinate + H2O + H(+). It functions in the pathway amino-acid biosynthesis; L-lysine biosynthesis via DAP pathway; (S)-tetrahydrodipicolinate from L-aspartate: step 3/4. Functionally, catalyzes the condensation of (S)-aspartate-beta-semialdehyde [(S)-ASA] and pyruvate to 4-hydroxy-tetrahydrodipicolinate (HTPA). This chain is 4-hydroxy-tetrahydrodipicolinate synthase, found in Oceanobacillus iheyensis (strain DSM 14371 / CIP 107618 / JCM 11309 / KCTC 3954 / HTE831).